We begin with the raw amino-acid sequence, 318 residues long: Ankyrin repeat and SOCS box protein 7 (318 aa).

ANK repeat units follow at residues 13–42 (QEES…SPNG), 46–75 (NGWT…DPTV), 80–109 (GGFT…RSDI), 116–145 (DGWT…EVDP), 149–178 (KGTT…NIDI), 180–208 (NGFL…DTNL), and 213–242 (DGQT…DTNT). An SOCS box domain is found at 265–318 (LDFLQEVTRQPRNLQDLCRIKIRQCIGLQNLKLLDELPIAKVMKDYLKHKSDDI).

This sequence belongs to the ankyrin SOCS box (ASB) family. As to quaternary structure, interacts with CUL5. Interacts with RNF7. Interacts with PSRC1.

It functions in the pathway protein modification; protein ubiquitination. In terms of biological role, probable substrate-recognition component of a SCF-like ECS (Elongin-Cullin-SOCS-box protein) E3 ubiquitin-protein ligase complex which mediates the ubiquitination and subsequent proteasomal degradation of target proteins. Plays a role in spindle dynamics and genome integrity by targeting the mitotic progression protein PSRC1 for proteasomal degradation in a cell cycle-dependent manner. Also participates in meiosis by mediating the proper attachment between kinetochores and microtubules. In Pongo abelii (Sumatran orangutan), this protein is Ankyrin repeat and SOCS box protein 7 (ASB7).